A 694-amino-acid polypeptide reads, in one-letter code: MGSYSAGFPGSLDWFDFPGLGNGSYLNDQPLLDIGSVPPPLDPYPQQNLASADADFSDSVLKYISQVLMEEDMEDKPCMFHDALSLQAAEKSLYEALGEKYPVDDSDQPLTTTTSLAQLVSSPGGSSYASSTTTTSSDSQWSFDCLENNRPSSWLQTPIPSNFIFQSTSTRASSGNAVFGSSFSGDLVSNMFNDTDLALQFKKGMEEASKFLPKSSQLVIDNSVPNRLTGKKSHWREEEHLTEERSKKQSAIYVDETDELTDMFDNILIFGEAKEQPVCILNESFPKEPAKASTFSKSPKGEKPEASGNSYTKETPDLRTMLVSCAQAVSINDRRTADELLSRIRQHSSSYGDGTERLAHYFANSLEARLAGIGTQVYTALSSKKTSTSDMLKAYQTYISVCPFKKIAIIFANHSIMRLASSANAKTIHIIDFGISDGFQWPSLIHRLAWRRGSSCKLRITGIELPQRGFRPAEGVIETGRRLAKYCQKFNIPFEYNAIAQKWESIKLEDLKLKEGEFVAVNSLFRFRNLLDETVAVHSPRDTVLKLIRKIKPDVFIPGILSGSYNAPFFVTRFREVLFHYSSLFDMCDTNLTREDPMRVMFEKEFYGREIMNVVACEGTERVERPESYKQWQARAMRAGFRQIPLEKELVQKLKLMVESGYKPKEFDVDQDCHWLLQGWKGRIVYGSSIWVPL.

A disordered region spans residues 289 to 313 (PAKASTFSKSPKGEKPEASGNSYTK). The 384-residue stretch at 309–692 (NSYTKETPDL…RIVYGSSIWV (384 aa)) folds into the GRAS domain. Residues 316 to 376 (PDLRTMLVSC…EARLAGIGTQ (61 aa)) are leucine repeat I (LRI). The tract at residues 395 to 462 (YQTYISVCPF…GSSCKLRITG (68 aa)) is VHIID. The short motif at 428–432 (IHIID) is the VHIID element. Positions 478–510 (ETGRRLAKYCQKFNIPFEYNAIAQKWESIKLED) are leucine repeat II (LRII). The segment at 519-613 (VAVNSLFRFR…KEFYGREIMN (95 aa)) is PFYRE. Residues 616–692 (ACEGTERVER…RIVYGSSIWV (77 aa)) form an SAW region.

The protein belongs to the GRAS family. Interacts with SNRNP35.

Its subcellular location is the nucleus. Its function is as follows. Probable transcription factor involved in plant development. The sequence is that of Scarecrow-like protein 33 (SCL33) from Arabidopsis thaliana (Mouse-ear cress).